The sequence spans 342 residues: MNLGVFPLLLALIGGASSTYPDYYEYYDFPQALYGRSSPNCAPECNCPESYPSAMYCDELKLKSVPMVPPGIKYLYLRNNQIDHIDDKAFENVTDLQWLILDHNLLENSKIKGKVFSKLKQLKKLHINYNNLTESVGPLPKSLVDLQLTNNKISKLGSFDGLVNLTFIHLQHNQLKEDAVSAALKGLKSLEYLDLSFNQMTKLPSGLPVSLLTLYLDNNKISNIPDEYFKRFSALQYLRLSHNELADSGVPGNSFNVSSLLELDLSYNKLKSIPTVNENLENYYLEVNELEKFDVKSFCKILGPLSYSKIKHLRLDGNHITQTSLPPDMYECLRVANEITVN.

Residues 1–18 (MNLGVFPLLLALIGGASS) form the signal peptide. A sulfotyrosine mark is found at tyrosine 20, tyrosine 23, and tyrosine 34. The LRRNT domain maps to 32-70 (ALYGRSSPNCAPECNCPESYPSAMYCDELKLKSVPMVPP). 8 LRR repeats span residues 71-92 (GIKY…AFEN), 95-118 (DLQW…VFSK), 121-141 (QLKK…PLPK), 142-163 (SLVD…DGLV), 164-185 (NLTF…AALK), 189-209 (SLEY…GLPV), 210-231 (SLLT…YFKR), and 234-254 (ALQY…PGNS). An N-linked (GlcNAc...) (keratan sulfate) asparagine glycan is attached at asparagine 92. Asparagine 131 carries N-linked (GlcNAc...) (keratan sulfate) asparagine glycosylation. A glycan (N-linked (GlcNAc...) (keratan sulfate) asparagine) is linked at asparagine 164. N-linked (GlcNAc...) (keratan sulfate) asparagine glycosylation is present at asparagine 256. LRR repeat units lie at residues 259–280 (SLLE…NENL) and 281–300 (ENYY…SFCK). Cysteine 299 and cysteine 332 form a disulfide bridge. Serine 308 is subject to Phosphoserine. An LRR 11 repeat occupies 309–330 (KIKHLRLDGNHITQTSLPPDMY).

Belongs to the small leucine-rich proteoglycan (SLRP) family. SLRP class II subfamily. In terms of assembly, binds to laminin. In terms of processing, sulfated on tyrosine residue(s). Post-translationally, contains keratan sulfate. Cornea and other tissues.

It localises to the secreted. The protein resides in the extracellular space. It is found in the extracellular matrix. This Bos taurus (Bovine) protein is Lumican (LUM).